Reading from the N-terminus, the 130-residue chain is Small ribosomal subunit protein uS9 (130 aa).

This sequence belongs to the universal ribosomal protein uS9 family.

The sequence is that of Small ribosomal subunit protein uS9 from Shewanella sediminis (strain HAW-EB3).